The primary structure comprises 146 residues: Mite group 2 allergen Der p 2 (146 aa).

The first 17 residues, 1–17, serve as a signal peptide directing secretion; that stretch reads MMYKILCLSLLVAAVAR. 3 disulfides stabilise this stretch: Cys-25-Cys-136, Cys-38-Cys-44, and Cys-90-Cys-95.

The protein belongs to the NPC2 family.

The protein localises to the secreted. This Dermatophagoides pteronyssinus (European house dust mite) protein is Mite group 2 allergen Der p 2 (DERP2).